A 224-amino-acid polypeptide reads, in one-letter code: Heme response regulator HssR (224 aa).

The Response regulatory domain maps to 3 to 116 (QCLVVDDDPR…ELIFRIRAVL (114 aa)). Asp52 carries the 4-aspartylphosphate modification. The segment at residues 124–222 (NSEMTIGNLT…VRGQGYKVEN (99 aa)) is a DNA-binding region (ompR/PhoB-type).

In terms of processing, phosphorylated by HssS.

The protein resides in the cytoplasm. Member of the two-component regulatory system HssS/HssR involved in intracellular heme homeostasis and tempering of staphylococcal virulence. Phosphorylated HssR binds to a direct repeat sequence within hrtAB promoter and activates the expression of hrtAB, an efflux pump, in response to extracellular heme, hemin, hemoglobin or blood. The protein is Heme response regulator HssR (hssR) of Staphylococcus aureus (strain MRSA252).